A 292-amino-acid polypeptide reads, in one-letter code: MSASVKESLQLQLLEMEMLFSMFPNQGEVKLEDVNALTNIKRYLEGTREALPPKIEFVITLQIEEPKVKIDLQVTMPHSYPYVALQLFGRSSELDRHQQLLLNKGLTSYIGTFDPGELCVCAAIQWLQDNSASYFLNRKLVYEPSTQAKPVKNTFLRMWIYSHHIYQQDLRKKILDVGKRLDVTGFCMTGKPGIICVEGFKEHCEEFWHTIRYPNWKHISCKHAESVETEGNGEDLRLFHSFEELLLEAHGDYGLRNDYHMNLGQFLEFLKKHKSEHVFQILFGIESKSSDS.

One can recognise an RWD domain in the interval 14–134; that stretch reads LEMEMLFSMF…QWLQDNSASY (121 aa).

In Homo sapiens (Human), this protein is RWD domain-containing protein 2A (RWDD2A).